The chain runs to 229 residues: RNA chaperone ProQ (229 aa).

A disordered region spans residues 105–178; that stretch reads EAKARVQAQR…PREEKHTPVS (74 aa). Residues 117–136 show a composition bias toward basic and acidic residues; sequence QQAKKREAAAAAGDKESAPR. The span at 137 to 146 shows a compositional bias: basic residues; that stretch reads RERKPRPAAP. Basic and acidic residues predominate over residues 147–176; sequence RRKEGAERKPRAEKPAAKAPRAPREEKHTP.

It belongs to the ProQ family.

It localises to the cytoplasm. In terms of biological role, RNA chaperone with significant RNA binding, RNA strand exchange and RNA duplexing activities. May regulate ProP activity through an RNA-based, post-transcriptional mechanism. This chain is RNA chaperone ProQ, found in Escherichia fergusonii (strain ATCC 35469 / DSM 13698 / CCUG 18766 / IAM 14443 / JCM 21226 / LMG 7866 / NBRC 102419 / NCTC 12128 / CDC 0568-73).